Reading from the N-terminus, the 177-residue chain is Transcriptional repressor NrdR (177 aa).

The segment at 3 to 34 (CPYCGGSETQVKDSRPSEDGAAIRRRRVCPDC) is a zinc-finger region. An ATP-cone domain is found at 49–139 (VVVLKRSGKR…VYKNFREARD (91 aa)). Residues 148-177 (SDGMPVPAAAPEAEGDPEPEASGRRRAGRP) form a disordered region.

The protein belongs to the NrdR family. It depends on Zn(2+) as a cofactor.

Negatively regulates transcription of bacterial ribonucleotide reductase nrd genes and operons by binding to NrdR-boxes. In Methylobacterium radiotolerans (strain ATCC 27329 / DSM 1819 / JCM 2831 / NBRC 15690 / NCIMB 10815 / 0-1), this protein is Transcriptional repressor NrdR.